The chain runs to 320 residues: MLTRSWRQRNLASLLYSLSHRRLLSQKIPDPKHVFTDPSNNEIVDSKHFFTNPSRDNLIEEEAIAKSIEASIKNQRRRRGKQVSSALAAALFATIFGYTIGYKVLYLHEHSFIPAYPVPKARNFSSNELKHINVDEIKHLAEYKLLEKLSMHPMIKEQYGVPLHKSQGISLESRQFSVWRQDVDPCIAGILIAPIDSPKDEHTWHNVPPLCKWRITNRSVNFRSFADQVLGRVGIDSSDLIQVIKPEKDCGDFKYGRPPHHSDGPRTMHICFLGEMKLGNEDLIIFRGTCHIDLKLQQVDLLRKENDKLVRYVLYHETKE.

The N-terminal 31 residues, 1–31, are a transit peptide targeting the mitochondrion; that stretch reads MLTRSWRQRNLASLLYSLSHRRLLSQKIPDP. The chain crosses the membrane as a helical span at residues 83–102; the sequence is VSSALAAALFATIFGYTIGY.

The protein belongs to the AIM39 family.

It is found in the mitochondrion membrane. In Lachancea thermotolerans (strain ATCC 56472 / CBS 6340 / NRRL Y-8284) (Yeast), this protein is Altered inheritance of mitochondria protein 39, mitochondrial (AIM39).